A 417-amino-acid polypeptide reads, in one-letter code: MRRWVLAIAILAAAVCFFLGAQAQEVRQGHQTERISGSAGDVLEDDPVGRLKVYVYDLPSKYNKKLLKKDPRCLNHMFAAEIFMHRFLLSSAVRTFNPEEADWFYTPVYTTCDLTPSGLPLPFKSPRMMRSAIELIATNWPYWNRSEGADHFFVTPHDFGACFHYQEEKAIGRGILPLLQRATLVQTFGQKNHVCLKDGSITIPPYAPPQKMQAHLIPPDTPRSIFVYFRGLFYDTSNDPEGGYYARGARASVWENFKNNPLFDISTDHPPTYYEDMQRSVFCLCPLGWAPWSPRLVEAVVFGCIPVIIADDIVLPFADAIPWEEIGVFVAEEDVPKLDSILTSIPTDVILRKQRLLANPSMKQAMLFPQPAQAGDAFHQILNGLARKLPHGENVFLKPGERALNWTAGPVGDLKPW.

The Cytoplasmic segment spans residues M1–R3. The helical; Signal-anchor for type II membrane protein transmembrane segment at W4 to Q24 threads the bilayer. The Lumenal segment spans residues E25–W417. N-linked (GlcNAc...) asparagine glycosylation is found at N144 and N405.

Belongs to the glycosyltransferase 47 family.

It localises to the golgi apparatus membrane. Functionally, involved in the synthesis of glucuronoxylan hemicellulose in secondary cell walls. This is Probable glucuronosyltransferase Os01g0926700 from Oryza sativa subsp. japonica (Rice).